The following is a 377-amino-acid chain: Transcription factor Sox-17-alpha-B (377 aa).

Disordered stretches follow at residues 1-20 (MSSP…KCSV) and 31-57 (QWSE…AEGR). Over residues 42–57 (GKLKSDANSRSKAEGR) the composition is skewed to basic and acidic residues. A DNA-binding region (HMG box) is located at residues 58–126 (IRRPMNAFMV…QHMQDHPNYK (69 aa)). One can recognise a Sox C-terminal domain in the interval 262–376 (GSPVEGMMAC…TAVYYCNYPS (115 aa)). Positions 282-321 (MYLPGSTRHHQHPQAGQPSPPPEAQQLGRADQTQQADMMA) are disordered. Positions 325–333 (TEFEQYLSY) match the 9aaTAD motif. A required for transcriptional activity and interaction with ctnnb1 region spans residues 326–331 (EFEQYL).

In terms of assembly, interacts (via C-terminus) with ctnnb1/beta-catenin (via Armadillo repeats); this interaction is required for inhibition of wnt-signaling. Enriched in the embryonic endoderm. Expressed in the embryonic gut, with strong expression in the posterior gut during tailbud stages. Expressed at a low level in the adult kidney and spleen.

Its subcellular location is the nucleus. Its function is as follows. Transcription activator. Binds to the DNA sequence 5'-AACAAT-3'. All of the sox17 proteins are required for embryonic endoderm development and gastrulation movements, and show some redundancy in function. In addition, the sox17 proteins have distinct but overlapping roles in later gut development. Acts downstream of vegt-signaling in endoderm differentiation to induce a range of endodermal genes both directly (including endodermin and dhh/chh) and indirectly. Also represses wnt-responsive genes to inhibit wnt/beta-catenin signaling. In Xenopus laevis (African clawed frog), this protein is Transcription factor Sox-17-alpha-B (sox17a-b).